The sequence spans 226 residues: Triosephosphate isomerase (226 aa).

Catalysis depends on H91, which acts as the Electrophile. The active-site Proton acceptor is the E163. Substrate-binding residues include G169 and S207.

Belongs to the triosephosphate isomerase family. Homodimer.

The protein resides in the cytoplasm. It catalyses the reaction D-glyceraldehyde 3-phosphate = dihydroxyacetone phosphate. It functions in the pathway carbohydrate biosynthesis; gluconeogenesis. It participates in carbohydrate degradation; glycolysis; D-glyceraldehyde 3-phosphate from glycerone phosphate: step 1/1. Functionally, involved in the gluconeogenesis. Catalyzes stereospecifically the conversion of dihydroxyacetone phosphate (DHAP) to D-glyceraldehyde-3-phosphate (G3P). This is Triosephosphate isomerase from Rhizobium etli (strain ATCC 51251 / DSM 11541 / JCM 21823 / NBRC 15573 / CFN 42).